The chain runs to 202 residues: Pyridoxal 5'-phosphate synthase subunit PdxT (202 aa).

L-glutamine is bound at residue Gly52–Ser54. Cys84 functions as the Nucleophile in the catalytic mechanism. L-glutamine-binding positions include Arg120 and Ile148–Arg149. Active-site charge relay system residues include His185 and Glu187.

The protein belongs to the glutaminase PdxT/SNO family. In the presence of PdxS, forms a dodecamer of heterodimers. Only shows activity in the heterodimer.

The enzyme catalyses aldehydo-D-ribose 5-phosphate + D-glyceraldehyde 3-phosphate + L-glutamine = pyridoxal 5'-phosphate + L-glutamate + phosphate + 3 H2O + H(+). It catalyses the reaction L-glutamine + H2O = L-glutamate + NH4(+). It functions in the pathway cofactor biosynthesis; pyridoxal 5'-phosphate biosynthesis. In terms of biological role, catalyzes the hydrolysis of glutamine to glutamate and ammonia as part of the biosynthesis of pyridoxal 5'-phosphate. The resulting ammonia molecule is channeled to the active site of PdxS. In Methanopyrus kandleri (strain AV19 / DSM 6324 / JCM 9639 / NBRC 100938), this protein is Pyridoxal 5'-phosphate synthase subunit PdxT.